The following is a 221-amino-acid chain: 7-cyano-7-deazaguanine synthase (221 aa).

9–19 (YSGGMDSFTVL) serves as a coordination point for ATP. Residues cysteine 186, cysteine 194, cysteine 197, and cysteine 200 each coordinate Zn(2+).

Belongs to the QueC family. Requires Zn(2+) as cofactor.

The catalysed reaction is 7-carboxy-7-deazaguanine + NH4(+) + ATP = 7-cyano-7-deazaguanine + ADP + phosphate + H2O + H(+). It functions in the pathway purine metabolism; 7-cyano-7-deazaguanine biosynthesis. In terms of biological role, catalyzes the ATP-dependent conversion of 7-carboxy-7-deazaguanine (CDG) to 7-cyano-7-deazaguanine (preQ(0)). The sequence is that of 7-cyano-7-deazaguanine synthase from Psychromonas ingrahamii (strain DSM 17664 / CCUG 51855 / 37).